We begin with the raw amino-acid sequence, 635 residues long: Threonine--tRNA ligase (635 aa).

A TGS domain is found at 1–61 (MVSIRLPDGS…DHDVALAIVT (61 aa)). The segment at 242-533 (DHRKLGKQLD…LIEHHAGAMP (292 aa)) is catalytic. Zn(2+) is bound by residues cysteine 333, histidine 384, and histidine 510.

It belongs to the class-II aminoacyl-tRNA synthetase family. Homodimer. Zn(2+) serves as cofactor.

The protein resides in the cytoplasm. The catalysed reaction is tRNA(Thr) + L-threonine + ATP = L-threonyl-tRNA(Thr) + AMP + diphosphate + H(+). Functionally, catalyzes the attachment of threonine to tRNA(Thr) in a two-step reaction: L-threonine is first activated by ATP to form Thr-AMP and then transferred to the acceptor end of tRNA(Thr). Also edits incorrectly charged L-seryl-tRNA(Thr). This chain is Threonine--tRNA ligase, found in Paraburkholderia phytofirmans (strain DSM 17436 / LMG 22146 / PsJN) (Burkholderia phytofirmans).